Consider the following 105-residue polypeptide: Sec-independent protein translocase protein TatA (105 aa).

The helical transmembrane segment at methionine 1–alanine 21 threads the bilayer. Basic and acidic residues predominate over residues glutamate 41–aspartate 50. The segment at glutamate 41–serine 105 is disordered. A compositionally biased stretch (low complexity) spans proline 52–proline 92. The segment covering glutamine 96–serine 105 has biased composition (basic and acidic residues).

This sequence belongs to the TatA/E family. As to quaternary structure, the Tat system comprises two distinct complexes: a TatABC complex, containing multiple copies of TatA, TatB and TatC subunits, and a separate TatA complex, containing only TatA subunits. Substrates initially bind to the TatABC complex, which probably triggers association of the separate TatA complex to form the active translocon.

The protein localises to the cell membrane. Its function is as follows. Part of the twin-arginine translocation (Tat) system that transports large folded proteins containing a characteristic twin-arginine motif in their signal peptide across membranes. TatA could form the protein-conducting channel of the Tat system. In Corynebacterium glutamicum (strain ATCC 13032 / DSM 20300 / JCM 1318 / BCRC 11384 / CCUG 27702 / LMG 3730 / NBRC 12168 / NCIMB 10025 / NRRL B-2784 / 534), this protein is Sec-independent protein translocase protein TatA.